We begin with the raw amino-acid sequence, 253 residues long: 5'-nucleotidase SurE (253 aa).

Aspartate 8, aspartate 9, serine 40, and asparagine 93 together coordinate a divalent metal cation.

The protein belongs to the SurE nucleotidase family. A divalent metal cation is required as a cofactor.

Its subcellular location is the cytoplasm. The enzyme catalyses a ribonucleoside 5'-phosphate + H2O = a ribonucleoside + phosphate. Nucleotidase that shows phosphatase activity on nucleoside 5'-monophosphates. The polypeptide is 5'-nucleotidase SurE (Haemophilus ducreyi (strain 35000HP / ATCC 700724)).